The primary structure comprises 943 residues: U3 small nucleolar RNA-associated protein 12 (943 aa).

WD repeat units follow at residues 77–107 (AKPA…KVWD), 119–149 (GHKA…IVWD), 161–190 (SHKD…KLWD), 202–230 (AHTG…KIWK), 389–418 (GQRT…KIWN), 428–458 (FECG…QLFD), 471–501 (AHDA…KFWD), 571–601 (GHKL…KIWG), 613–643 (AHQD…KYWD), and 655–685 (AHQS…RIWE). The segment at 715–739 (EGNGDDAFKADASGEGVEDEASGVH) is disordered.

This sequence belongs to the WD repeat WDR3/UTP12 family. In terms of assembly, interacts with snoRNA U3. Interacts with MPP10. Component of the ribosomal small subunit (SSU) processome composed of at least 40 protein subunits and snoRNA U3.

It is found in the nucleus. Its subcellular location is the nucleolus. Functionally, involved in nucleolar processing of pre-18S ribosomal RNA. The polypeptide is U3 small nucleolar RNA-associated protein 12 (DIP2) (Saccharomyces cerevisiae (strain ATCC 204508 / S288c) (Baker's yeast)).